We begin with the raw amino-acid sequence, 252 residues long: Phosphate import ATP-binding protein PstB 2 (252 aa).

The ABC transporter domain maps to 6–247 (ISINDLSVYF…PQHKETEDYI (242 aa)). Position 38–45 (38–45 (GPSGSGKS)) interacts with ATP.

The protein belongs to the ABC transporter superfamily. Phosphate importer (TC 3.A.1.7) family. As to quaternary structure, the complex is composed of two ATP-binding proteins (PstB), two transmembrane proteins (PstC and PstA) and a solute-binding protein (PstS).

It localises to the cell membrane. The catalysed reaction is phosphate(out) + ATP + H2O = ADP + 2 phosphate(in) + H(+). Part of the ABC transporter complex PstSACB involved in phosphate import. Responsible for energy coupling to the transport system. This chain is Phosphate import ATP-binding protein PstB 2, found in Streptococcus thermophilus (strain CNRZ 1066).